A 457-amino-acid polypeptide reads, in one-letter code: tRNA modification GTPase MnmE (457 aa).

Residues arginine 25, glutamate 87, and arginine 126 each coordinate (6S)-5-formyl-5,6,7,8-tetrahydrofolate. Residues glycine 223 to phenylalanine 377 enclose the TrmE-type G domain. Asparagine 233 lines the K(+) pocket. Residues asparagine 233–serine 238, threonine 252–threonine 258, and aspartate 277–glycine 280 each bind GTP. Position 237 (serine 237) interacts with Mg(2+). 3 residues coordinate K(+): threonine 252, isoleucine 254, and threonine 257. Mg(2+) is bound at residue threonine 258. Position 457 (lysine 457) interacts with (6S)-5-formyl-5,6,7,8-tetrahydrofolate.

The protein belongs to the TRAFAC class TrmE-Era-EngA-EngB-Septin-like GTPase superfamily. TrmE GTPase family. In terms of assembly, homodimer. Heterotetramer of two MnmE and two MnmG subunits. Requires K(+) as cofactor.

Its subcellular location is the cytoplasm. In terms of biological role, exhibits a very high intrinsic GTPase hydrolysis rate. Involved in the addition of a carboxymethylaminomethyl (cmnm) group at the wobble position (U34) of certain tRNAs, forming tRNA-cmnm(5)s(2)U34. The chain is tRNA modification GTPase MnmE from Streptococcus pneumoniae serotype 2 (strain D39 / NCTC 7466).